The chain runs to 2254 residues: Voltage-dependent T-type calcium channel subunit alpha-1G (2254 aa).

Positions 1–48 (MDEEEDGAGAEESGQPRSFTQLNDLSGAGGRQGPGSTEKDPGSADSEA) are disordered. The Cytoplasmic segment spans residues 1 to 80 (MDEEEDGAGA…RSWCLRTVCN (80 aa)). Residues 15-24 (QPRSFTQLND) show a composition bias toward polar residues. Residues 68–398 (SRPRSWCLRT…LCLVVIATQF (331 aa)) form an I repeat. A helical membrane pass occupies residues 81–101 (PWFERVSMLVILLNCVTLGMF). At 102–119 (RPCEDIACDSQRCRILQA) the chain is on the extracellular side. Residues 120–141 (FDDFIFAFFAVEMVVKMVALGI) traverse the membrane as a helical segment. The Cytoplasmic segment spans residues 142-150 (FGKKCYLGD). Residues 151–170 (TWNRLDFFIVIAGMLEYSLD) traverse the membrane as a helical segment. Residues 171–175 (LQNVS) are Extracellular-facing. N173 carries an N-linked (GlcNAc...) asparagine glycan. Residues 176 to 193 (FSAVRTVRVLRPLRAINR) form a helical membrane-spanning segment. Topologically, residues 194–213 (VPSMRILVTLLLDTLPMLGN) are cytoplasmic. Residues 214–234 (VLLLCFFVFFIFGIVGVQLWA) traverse the membrane as a helical segment. Residues 235–370 (GLLRNRCFLP…YFVMDAHSFY (136 aa)) lie on the Extracellular side of the membrane. N246, N306, N310, and N322 each carry an N-linked (GlcNAc...) asparagine glycan. Residues 371–395 (NFIYFILLIIVGSFFMINLCLVVIA) traverse the membrane as a helical segment. The Cytoplasmic portion of the chain corresponds to 396-744 (TQFSETKQRE…DTFRKIVDSK (349 aa)). Residue S467 is modified to Phosphoserine. Over residues 494–506 (LVHHHHHHHHHYH) the composition is skewed to basic residues. Disordered regions lie at residues 494–513 (LVHHHHHHHHHYHLGNGTLR), 525–553 (DANGSRRLMLPPPSTPTPSGGPPRGAESV), 579–598 (ASGRTVGSGKVYPTVHTSPP), and 699–721 (DAQHSDLRDPHSRRRQRSLGPDA). Positions 534–545 (LPPPSTPTPSGG) are enriched in pro residues. Position 716 is a phosphoserine (S716). An II repeat occupies 730–968 (WRLICDTFRK…LLVAILVEGF (239 aa)). The chain crosses the membrane as a helical span at residues 745–765 (YFGRGIMIAILVNTLSMGIEY). At 766 to 778 (HEQPEELTNALEI) the chain is on the extracellular side. A helical membrane pass occupies residues 779 to 800 (SNIVFTSLFALEMLLKLLVYGP). At 801-806 (FGYIKN) the chain is on the cytoplasmic side. A helical transmembrane segment spans residues 807–825 (PYNIFDGVIVVISVWEIVG). Topologically, residues 826-833 (QQGGGLSV) are extracellular. A helical membrane pass occupies residues 834 to 857 (LRTFRLMRVLKLVRFLPALQRQLV). Topologically, residues 858-868 (VLMKTMDNVAT) are cytoplasmic. Residues 869-889 (FCMLLMLFIFIFSILGMHLFG) traverse the membrane as a helical segment. At 890 to 940 (CKFASERDGDTLPDRKNFDSLLWAIVTVFQILTQEDWNKVLYNGMASTSSW) the chain is on the extracellular side. The helical transmembrane segment at 941–965 (AALYFIALMTFGNYVLFNLLVAILV) threads the bilayer. The Cytoplasmic portion of the chain corresponds to 966–1251 (EGFQAEGDAT…SRFRLLCHRI (286 aa)). Residues 1024-1209 (TPMSHPKSSS…GDDDNDEGNL (186 aa)) form a disordered region. Composition is skewed to low complexity over residues 1041–1052 (GSGSRRTSSSGS) and 1065–1091 (PPSARSSPHSPWSAASSWTSRRSSRNS). Acidic residues-rich tracts occupy residues 1117–1126 (ESQDEEESSE) and 1196–1206 (PQLDGDDDNDE). Phosphoserine is present on residues S1118, S1124, and S1125. One copy of the III repeat lies at 1242–1519 (SRFRLLCHRI…MFVGVVVENF (278 aa)). A helical transmembrane segment spans residues 1252–1274 (ITHKMFDHVVLVIIFLNCITIAM). Over 1275–1292 (ERPKIDPHSAERIFLTLS) the chain is Extracellular. A helical membrane pass occupies residues 1293–1313 (NYIFTAVFLAEMTVKVVALGW). Topologically, residues 1314–1323 (CFGEQAYLRS) are cytoplasmic. The chain crosses the membrane as a helical span at residues 1324 to 1343 (SWNVLDGLLVLISVIDILVS). Residues 1344–1357 (MVSDSGTKILGMLR) are Extracellular-facing. Residues 1358–1379 (VLRLLRTLRPLRVISRAQGLKL) form a helical membrane-spanning segment. Topologically, residues 1380–1389 (VVETLMSSLK) are cytoplasmic. A helical transmembrane segment spans residues 1390–1413 (PIGNIVVICCAFFIIFGILGVQLF). At 1414–1490 (KGKFFVCQGE…DQQPIMNHNP (77 aa)) the chain is on the extracellular side. 2 N-linked (GlcNAc...) asparagine glycosylation sites follow: N1427 and N1430. The helical transmembrane segment at 1491 to 1516 (WMLLYFISFLLIVAFFVLNMFVGVVV) threads the bilayer. At 1517–1578 (ENFHKCRQHQ…RLLVHHLCTS (62 aa)) the chain is on the cytoplasmic side. One copy of the IV repeat lies at 1564 to 1822 (DYSRFRLLVH…VVIAVLMKHL (259 aa)). Residues 1579–1599 (HYLDLFITGVIGLNVVTMAME) traverse the membrane as a helical segment. Over 1600-1613 (HYQQPQILDEALKI) the chain is Extracellular. Residues 1614–1635 (CNYIFTVIFVFESVFKLVAFGF) form a helical membrane-spanning segment. The Cytoplasmic portion of the chain corresponds to 1636–1642 (RRFFQDR). The helical transmembrane segment at 1643 to 1661 (WNQLDLAIVLLSIMGITLE) threads the bilayer. Over 1662 to 1675 (EIEVNLSLPINPTI) the chain is Extracellular. Residue N1666 is glycosylated (N-linked (GlcNAc...) asparagine). Residues 1676 to 1699 (IRIMRVLRIARVLKLLKMAVGMRA) form a helical membrane-spanning segment. Residues 1700–1713 (LLHTVMQALPQVGN) lie on the Cytoplasmic side of the membrane. Residues 1714-1734 (LGLLFMLLFFIFAALGVELFG) traverse the membrane as a helical segment. The Extracellular segment spans residues 1735 to 1794 (DLECDETHPCEGLGRHATFRNFGMAFLTLFRVSTGDNWNGIMKDTLRDCDQESTCYNTVI). The chain crosses the membrane as a helical span at residues 1795 to 1822 (SPIYFVSFVLTAQFVLVNVVIAVLMKHL). Residues 1823–2254 (EESNKEAKEE…LSSDPTDMDP (432 aa)) lie on the Cytoplasmic side of the membrane. The segment at 2153–2254 (DSGSQPRLCP…LSSDPTDMDP (102 aa)) is disordered. Residues 2184–2193 (SPPSISIDPP) are compositionally biased toward low complexity. Composition is skewed to polar residues over residues 2220–2232 (PSVSSPLDSTAAS) and 2240–2254 (LSLSGLSSDPTDMDP).

The protein belongs to the calcium channel alpha-1 subunit (TC 1.A.1.11) family. CACNA1G subfamily. In terms of processing, in response to raising of intracellular calcium, the T-type channels are activated by CaM-kinase II. Highly expressed in brain. Moderate expression in heart; low expression in placenta, kidney and lung.

It localises to the cell membrane. The protein resides in the cytoplasm. It catalyses the reaction Ca(2+)(in) = Ca(2+)(out). Voltage-sensitive calcium channels (VSCC) mediate the entry of calcium ions into excitable cells and are also involved in a variety of calcium-dependent processes, including muscle contraction, hormone or neurotransmitter release, gene expression, cell motility, cell division and cell death. The isoform alpha-1G gives rise to T-type calcium currents. T-type calcium channels belong to the 'low-voltage activated (LVA)' group and are strongly blocked by nickel and mibefradil. A particularity of this type of channels is an opening at quite negative potentials and a voltage-dependent inactivation. T-type channels serve pacemaking functions in both central neurons and cardiac nodal cells and support calcium signaling in secretory cells and vascular smooth muscle. They may also be involved in the modulation of firing patterns of neurons which is important for information processing as well as in cell growth processes. This chain is Voltage-dependent T-type calcium channel subunit alpha-1G (Cacna1g), found in Rattus norvegicus (Rat).